Here is a 243-residue protein sequence, read N- to C-terminus: Phosphoribosyl isomerase A (243 aa).

The active-site Proton acceptor is the aspartate 9. The active-site Proton donor is aspartate 128.

This sequence belongs to the HisA/HisF family.

It localises to the cytoplasm. It catalyses the reaction 1-(5-phospho-beta-D-ribosyl)-5-[(5-phospho-beta-D-ribosylamino)methylideneamino]imidazole-4-carboxamide = 5-[(5-phospho-1-deoxy-D-ribulos-1-ylimino)methylamino]-1-(5-phospho-beta-D-ribosyl)imidazole-4-carboxamide. The catalysed reaction is N-(5-phospho-beta-D-ribosyl)anthranilate = 1-(2-carboxyphenylamino)-1-deoxy-D-ribulose 5-phosphate. Its pathway is amino-acid biosynthesis; L-histidine biosynthesis; L-histidine from 5-phospho-alpha-D-ribose 1-diphosphate: step 4/9. It participates in amino-acid biosynthesis; L-tryptophan biosynthesis; L-tryptophan from chorismate: step 3/5. Its function is as follows. Involved in both the histidine and tryptophan biosynthetic pathways. In Mycobacterium avium (strain 104), this protein is Phosphoribosyl isomerase A.